We begin with the raw amino-acid sequence, 625 residues long: Chaperone protein HtpG (625 aa).

An a; substrate-binding region spans residues 1–337 (MSTNQETRGF…TNDLPLNVSR (337 aa)). Positions 338 to 554 (EILQENKITA…NDEMTTQMAK (217 aa)) are b. A c region spans residues 555 to 625 (LFAAMGQKAP…FIKRMNKLLG (71 aa)).

Belongs to the heat shock protein 90 family. Homodimer.

The protein localises to the cytoplasm. Molecular chaperone. Has ATPase activity. In Actinobacillus pleuropneumoniae serotype 3 (strain JL03), this protein is Chaperone protein HtpG.